The primary structure comprises 96 residues: Large ribosomal subunit protein eL30 (96 aa).

The protein belongs to the eukaryotic ribosomal protein eL30 family.

In Methanosphaerula palustris (strain ATCC BAA-1556 / DSM 19958 / E1-9c), this protein is Large ribosomal subunit protein eL30.